The primary structure comprises 275 residues: Large ribosomal subunit protein uL2c (275 aa).

The tract at residues 225-249 is disordered; it reads PVDHPHGGGEGRAPIGRKKPTTPWG.

The protein belongs to the universal ribosomal protein uL2 family. In terms of assembly, part of the 50S ribosomal subunit.

The protein localises to the plastid. In Cuscuta reflexa (Southern Asian dodder), this protein is Large ribosomal subunit protein uL2c (rpl2).